Here is a 165-residue protein sequence, read N- to C-terminus: Disulfide bond formation protein B (165 aa).

Over Met1 to Trp11 the chain is Cytoplasmic. A helical membrane pass occupies residues Phe12–Ala28. Over Leu29–Leu46 the chain is Periplasmic. A disulfide bridge links Cys38 with Cys41. The helical transmembrane segment at Leu47–Leu61 threads the bilayer. Residues Pro62–Leu66 are Cytoplasmic-facing. The helical transmembrane segment at Leu67 to Ala84 threads the bilayer. Residues Tyr85 to Asn142 are Periplasmic-facing. Cys99 and Cys128 are joined by a disulfide. The chain crosses the membrane as a helical span at residues Trp143–Arg161. The Cytoplasmic portion of the chain corresponds to Lys162–Ala165.

Belongs to the DsbB family.

The protein localises to the cell inner membrane. In terms of biological role, required for disulfide bond formation in some periplasmic proteins. Acts by oxidizing the DsbA protein. The chain is Disulfide bond formation protein B from Dechloromonas aromatica (strain RCB).